Consider the following 284-residue polypeptide: Para-Rep C3 (284 aa).

Residues 3–98 (TVQSTCWVFT…IEGPWEYGKY (96 aa)) enclose the CRESS-DNA virus Rep endonuclease domain. Positions 10 to 13 (VFTL) match the RCR-1 motif. Positions 36 and 42 each coordinate a divalent metal cation. The RCR-2 signature appears at 42–44 (HLQ). The Nuclear localization signal signature appears at 51 to 71 (AQQSLGQMKAIIPGAHFEKMR). Y81 (for DNA cleavage activity) is an active-site residue. An RCR-3 motif is present at residues 81–84 (YAMK). D86 is a binding site for a divalent metal cation. A Nuclear localization signal motif is present at residues 98–104 (YIKKGSH). 174-182 (GPKGGEGKS) contributes to the ATP binding site.

This sequence belongs to the nanoviridea/circoviridae replication-associated protein family. In terms of assembly, homooligomer (Potential). Rep binds to repeated DNA motifs (iterons). Mg(2+) is required as a cofactor. The cofactor is Mn(2+).

It is found in the host nucleus. It carries out the reaction ATP + H2O = ADP + phosphate + H(+). Initiates and terminates the replication only of its own subviral DNA molecule. The closed circular ssDNA genome is first converted to a superhelical dsDNA. Rep binds a specific hairpin at the genome origin of replication. Introduces an endonucleolytic nick within the intergenic region of the genome, thereby initiating the rolling circle replication (RCR). Following cleavage, binds covalently to the 5'-phosphate of DNA as a tyrosyl ester. The cleavage gives rise to a free 3'-OH that serves as a primer for the cellular DNA polymerase. The polymerase synthesizes the (+) strand DNA by rolling circle mechanism. After one round of replication, a Rep-catalyzed nucleotidyl transfer reaction releases a circular single-stranded virus genome, thereby terminating the replication. Displays origin-specific DNA cleavage, nucleotidyl transferase, ATPase and helicase activities. The chain is Para-Rep C3 (C3) from Milk vetch dwarf C3 alphasatellite (MVDC3A).